A 314-amino-acid polypeptide reads, in one-letter code: Methionyl-tRNA formyltransferase (314 aa).

Residue 110 to 113 (SLLP) participates in (6S)-5,6,7,8-tetrahydrofolate binding.

The protein belongs to the Fmt family.

The enzyme catalyses L-methionyl-tRNA(fMet) + (6R)-10-formyltetrahydrofolate = N-formyl-L-methionyl-tRNA(fMet) + (6S)-5,6,7,8-tetrahydrofolate + H(+). Its function is as follows. Attaches a formyl group to the free amino group of methionyl-tRNA(fMet). The formyl group appears to play a dual role in the initiator identity of N-formylmethionyl-tRNA by promoting its recognition by IF2 and preventing the misappropriation of this tRNA by the elongation apparatus. This is Methionyl-tRNA formyltransferase from Dichelobacter nodosus (strain VCS1703A).